The following is a 700-amino-acid chain: Hedgehog-interacting protein (700 aa).

A signal peptide spans 1–17 (MLKMLSFKLLLLAVALG). An N-linked (GlcNAc...) asparagine glycan is attached at asparagine 99. Cystine bridges form between cysteine 216-cysteine 536, cysteine 218-cysteine 543, cysteine 402-cysteine 624, cysteine 435-cysteine 452, cysteine 500-cysteine 594, cysteine 612-cysteine 623, cysteine 625-cysteine 634, cysteine 639-cysteine 649, cysteine 643-cysteine 655, and cysteine 657-cysteine 666. Positions 376-388 (LDDMEEMDGLSDF) are interaction with SHH zinc binding site. Position 383 (aspartate 383) interacts with Zn(2+). 3 N-linked (GlcNAc...) asparagine glycosylation sites follow: asparagine 416, asparagine 447, and asparagine 459. 2 consecutive EGF-like domains span residues 607–634 (DCSR…GDFC) and 635–667 (RIAK…PQCE).

The protein belongs to the HHIP family. Interacts with all three hedgehog family members, SHH, IHH and DHH. In terms of tissue distribution, in the adult brain, high expression found in the ventral cochlear nucleus, medial habenula, indusium griseum and tenia tecta. Some expression also in the caudate putamen, the nucleus accumbens, the ventral pallidum and in the superficial layers of the superior colliculus.

The protein resides in the cell membrane. The protein localises to the secreted. In terms of biological role, modulates hedgehog signaling in several cell types, including brain and lung through direct interaction with members of the hedgehog family. Soluble forms inhibit Shh-induced differentiation in the fibroblast cell line C3H/10T1/2. The polypeptide is Hedgehog-interacting protein (Hhip) (Mus musculus (Mouse)).